The sequence spans 494 residues: Glycosyl hydrolase family 109 protein (494 aa).

The segment at 1–32 (MNDDARPAPEPQDIPPHSGAADEVNRQDPSRR) is disordered. Residues 1–58 (MNDDARPAPEPQDIPPHSGAADEVNRQDPSRRSVLWTTAGVAGAGLGLGALGAGTASA) constitute a signal peptide (tat-type signal). NAD(+) is bound by residues 104 to 105 (NR), Asp-126, 175 to 178 (WELH), 195 to 196 (EC), and Asn-224. Residues Tyr-253, Arg-272, 284–287 (YPNH), and Tyr-366 contribute to the substrate site. NAD(+) is bound at residue Tyr-284.

Belongs to the Gfo/Idh/MocA family. Glycosyl hydrolase 109 subfamily. NAD(+) serves as cofactor. In terms of processing, predicted to be exported by the Tat system. The position of the signal peptide cleavage has not been experimentally proven.

Glycosidase. This is Glycosyl hydrolase family 109 protein from Streptomyces filamentosus (Streptomyces roseosporus).